The primary structure comprises 119 residues: uncharacterized protein (119 aa).

The first 26 residues, 1 to 26 (MNKLKRLSMLTVMIASVFIFSSHALA), serve as a signal peptide directing secretion. Residues 30–104 (YTVSTSSGAP…IVPGFVSDTY (75 aa)) form the SH3b domain.

It to B.subtilis YraJ.

This is an uncharacterized protein from Bacillus subtilis (strain 168).